The chain runs to 194 residues: Histone H1.0 (194 aa).

Met-1 is modified (N-acetylmethionine). The span at 1–11 (MTENSTSAPAA) shows a compositional bias: low complexity. The interval 1–28 (MTENSTSAPAAKPKRAKASKKSTDHPKY) is disordered. Thr-2 carries the N-acetylthreonine; in Histone H1.0, N-terminally processed modification. The 74-residue stretch at 24–97 (DHPKYSDMIV…GASGSFRLAK (74 aa)) folds into the H15 domain. Citrulline is present on Arg-42. Residues 86–194 (GVGASGSFRL…SSAKRASKKK (109 aa)) are disordered. Position 104 is an ADP-ribosylserine (Ser-104). Positions 105–194 (VAFKKTKKEV…SSAKRASKKK (90 aa)) are enriched in basic residues.

The protein belongs to the histone H1/H5 family. In terms of processing, ADP-ribosylated on Ser-104 in response to DNA damage.

Its subcellular location is the nucleus. The protein localises to the chromosome. In terms of biological role, histones H1 are necessary for the condensation of nucleosome chains into higher-order structures. The histones H1.0 are found in cells that are in terminal stages of differentiation or that have low rates of cell division. The polypeptide is Histone H1.0 (H1-0) (Mus musculus (Mouse)).